The following is an 83-amino-acid chain: Small ribosomal subunit protein bS18 (83 aa).

Belongs to the bacterial ribosomal protein bS18 family. In terms of assembly, part of the 30S ribosomal subunit. Forms a tight heterodimer with protein bS6.

Functionally, binds as a heterodimer with protein bS6 to the central domain of the 16S rRNA, where it helps stabilize the platform of the 30S subunit. This Tropheryma whipplei (strain TW08/27) (Whipple's bacillus) protein is Small ribosomal subunit protein bS18.